We begin with the raw amino-acid sequence, 292 residues long: Large ribosomal subunit protein bL19m (292 aa).

Residues Ser-41–Pro-60 are disordered. At Ser-77 the chain carries Phosphoserine.

Belongs to the bacterial ribosomal protein bL19 family. As to quaternary structure, component of the mitochondrial ribosome large subunit (39S) which comprises a 16S rRNA and about 50 distinct proteins.

The protein localises to the mitochondrion. This chain is Large ribosomal subunit protein bL19m (Mrpl19), found in Mus musculus (Mouse).